Reading from the N-terminus, the 109-residue chain is Nucleoid-associated protein VV2410 (109 aa).

The tract at residues 1–22 (MFGKGGMGNLMKQAQQMQERMQ) is disordered.

It belongs to the YbaB/EbfC family. Homodimer.

The protein localises to the cytoplasm. It is found in the nucleoid. Functionally, binds to DNA and alters its conformation. May be involved in regulation of gene expression, nucleoid organization and DNA protection. The protein is Nucleoid-associated protein VV2410 of Vibrio vulnificus (strain YJ016).